The sequence spans 571 residues: Streptolysin O (571 aa).

An N-terminal signal peptide occupies residues 1–33 (MSNKKTFKKYSRVAGLLTAALIIGNLVTANAES). The disordered stretch occupies residues 30–108 (NAESNKQNTA…KKSEEDHTEE (79 aa)). Residues 37 to 48 (NTASTETTTTNE) are compositionally biased toward low complexity. 2 stretches are compositionally biased toward basic and acidic residues: residues 50–68 (PKPE…KTDD) and 79–108 (APKE…HTEE). A run of 4 beta stranded transmembrane segments spans residues 260 to 273 (KSQI…NSKI), 280 to 289 (IDFKSISKGE), 358 to 367 (SNDVEAAFSA), and 375 to 387 (KTNG…LENS). The Conserved undecapeptide motif lies at 529-539 (ECTGLAWEWWR). Residues 561–562 (TL) carry the Cholesterol binding motif.

Belongs to the cholesterol-dependent cytolysin family. In terms of assembly, homooligomeric pore complex of 35 to 50 subunits; when inserted in the host membrane.

Its subcellular location is the secreted. It localises to the host cell membrane. A cholesterol-dependent toxin that causes cytolysis by forming pores in cholesterol containing host membranes. After binding to target membranes, the protein undergoes a major conformation change, leading to its insertion in the host membrane and formation of an oligomeric pore complex. Cholesterol is required for binding to host membranes, membrane insertion and pore formation; cholesterol binding is mediated by a Thr-Leu pair in the C-terminus. Can be reversibly inactivated by oxidation. In Streptococcus pyogenes serotype M3 (strain ATCC BAA-595 / MGAS315), this protein is Streptolysin O (slo).